Here is a 456-residue protein sequence, read N- to C-terminus: RuvB-like 1 (456 aa).

The interval 1 to 20 is disordered; sequence MKIEEVKSTTKTQRIASHSH. 70-77 serves as a coordination point for ATP; that stretch reads GPPGTGKT.

It belongs to the RuvB family. As to quaternary structure, forms homohexameric rings. Can form a dodecamer with ruvbl2 made of two stacked hexameric rings. Is a component of the RNA polymerase II holoenzyme complex. Component of the chromatin-remodeling Ino80 complex. Component of some MLL1/MLL complex.

It localises to the nucleus. The protein localises to the dynein axonemal particle. It catalyses the reaction ATP + H2O = ADP + phosphate + H(+). In terms of biological role, has single-stranded DNA-stimulated ATPase and ATP-dependent DNA helicase (3' to 5') activity suggesting a role in nuclear processes such as recombination and transcription. Proposed core component of the chromatin remodeling Ino80 complex which exhibits DNA- and nucleosome-activated ATPase activity and catalyzes ATP-dependent nucleosome sliding. May act as a negative regulator of embryonic heart growth. The protein is RuvB-like 1 (ruvbl1) of Danio rerio (Zebrafish).